Reading from the N-terminus, the 351-residue chain is Phospho-N-acetylmuramoyl-pentapeptide-transferase (351 aa).

A run of 10 helical transmembrane segments spans residues threonine 17–serine 37, methionine 61–isoleucine 83, isoleucine 88–phenylalanine 105, isoleucine 130–isoleucine 150, serine 158–alanine 178, glycine 190–threonine 210, leucine 230–tyrosine 250, isoleucine 254–isoleucine 274, isoleucine 279–valine 299, and glutamine 328–isoleucine 348.

The protein belongs to the glycosyltransferase 4 family. MraY subfamily. Mg(2+) serves as cofactor.

The protein localises to the cell inner membrane. The catalysed reaction is UDP-N-acetyl-alpha-D-muramoyl-L-alanyl-gamma-D-glutamyl-meso-2,6-diaminopimeloyl-D-alanyl-D-alanine + di-trans,octa-cis-undecaprenyl phosphate = di-trans,octa-cis-undecaprenyl diphospho-N-acetyl-alpha-D-muramoyl-L-alanyl-D-glutamyl-meso-2,6-diaminopimeloyl-D-alanyl-D-alanine + UMP. The protein operates within cell wall biogenesis; peptidoglycan biosynthesis. Its function is as follows. Catalyzes the initial step of the lipid cycle reactions in the biosynthesis of the cell wall peptidoglycan: transfers peptidoglycan precursor phospho-MurNAc-pentapeptide from UDP-MurNAc-pentapeptide onto the lipid carrier undecaprenyl phosphate, yielding undecaprenyl-pyrophosphoryl-MurNAc-pentapeptide, known as lipid I. This Borrelia recurrentis (strain A1) protein is Phospho-N-acetylmuramoyl-pentapeptide-transferase.